Reading from the N-terminus, the 356-residue chain is Tetraacyldisaccharide 4'-kinase (356 aa).

67–74 (FVGGTGKT) is a binding site for ATP.

Belongs to the LpxK family.

The enzyme catalyses a lipid A disaccharide + ATP = a lipid IVA + ADP + H(+). Its pathway is glycolipid biosynthesis; lipid IV(A) biosynthesis; lipid IV(A) from (3R)-3-hydroxytetradecanoyl-[acyl-carrier-protein] and UDP-N-acetyl-alpha-D-glucosamine: step 6/6. Functionally, transfers the gamma-phosphate of ATP to the 4'-position of a tetraacyldisaccharide 1-phosphate intermediate (termed DS-1-P) to form tetraacyldisaccharide 1,4'-bis-phosphate (lipid IVA). This chain is Tetraacyldisaccharide 4'-kinase, found in Herminiimonas arsenicoxydans.